Reading from the N-terminus, the 381-residue chain is Chaperone protein DnaJ (381 aa).

The J domain occupies 4–69 (DYYEILGVAR…EKRARYDQFG (66 aa)). The segment at 139 to 221 (GGEKELRVTR…CGGSGLVRKT (83 aa)) adopts a CR-type zinc-finger fold. Residues cysteine 152, cysteine 155, cysteine 169, cysteine 172, cysteine 195, cysteine 198, cysteine 209, and cysteine 212 each coordinate Zn(2+). 4 CXXCXGXG motif repeats span residues 152-159 (CGHCHGNG), 169-176 (CPTCQGRG), 195-202 (CSTCRGEG), and 209-216 (CRECGGSG).

This sequence belongs to the DnaJ family. In terms of assembly, homodimer. It depends on Zn(2+) as a cofactor.

It localises to the cytoplasm. In terms of biological role, participates actively in the response to hyperosmotic and heat shock by preventing the aggregation of stress-denatured proteins and by disaggregating proteins, also in an autonomous, DnaK-independent fashion. Unfolded proteins bind initially to DnaJ; upon interaction with the DnaJ-bound protein, DnaK hydrolyzes its bound ATP, resulting in the formation of a stable complex. GrpE releases ADP from DnaK; ATP binding to DnaK triggers the release of the substrate protein, thus completing the reaction cycle. Several rounds of ATP-dependent interactions between DnaJ, DnaK and GrpE are required for fully efficient folding. Also involved, together with DnaK and GrpE, in the DNA replication of plasmids through activation of initiation proteins. The chain is Chaperone protein DnaJ from Carboxydothermus hydrogenoformans (strain ATCC BAA-161 / DSM 6008 / Z-2901).